Reading from the N-terminus, the 151-residue chain is Probable cyclic pyranopterin monophosphate synthase (151 aa).

Substrate contacts are provided by residues 66–68 (MCH) and 102–103 (ME). The active site involves aspartate 117.

This sequence belongs to the MoaC family. As to quaternary structure, homohexamer; trimer of dimers.

It catalyses the reaction (8S)-3',8-cyclo-7,8-dihydroguanosine 5'-triphosphate = cyclic pyranopterin phosphate + diphosphate. It participates in cofactor biosynthesis; molybdopterin biosynthesis. In terms of biological role, catalyzes the conversion of (8S)-3',8-cyclo-7,8-dihydroguanosine 5'-triphosphate to cyclic pyranopterin monophosphate (cPMP). In Sulfurisphaera tokodaii (strain DSM 16993 / JCM 10545 / NBRC 100140 / 7) (Sulfolobus tokodaii), this protein is Probable cyclic pyranopterin monophosphate synthase.